We begin with the raw amino-acid sequence, 71 residues long: Cytotoxic linear peptide IsCT2 (71 aa).

The N-terminal stretch at 1-23 (MKTQFAILLVALVLFQMFAQSEA) is a signal peptide. Phenylalanine 36 is subject to Phenylalanine amide. The propeptide occupies 40–71 (ALNNDLDLDGLDELFDGEISQADVDFLKELMR).

Belongs to the non-disulfide-bridged peptide (NDBP) superfamily. Short antimicrobial peptide (group 4) family. In terms of processing, isCT2F is an enzymatic proteolytic cleavage product of IsCT2 by the proteases present in the venom. Expressed by the venom gland.

Its subcellular location is the secreted. The protein resides in the target cell membrane. In terms of biological role, isCT2 shows weak hemolytic activity and antibacterial activity against both Gram-positive and Gram-negative bacteria probably by forming pores in the cell membrane. IsCT2 adopts an amphipathic alpha-helical structure. Its function is as follows. IsCT2f shows neither hemolytic, nor antibacterial activities, surely due to the fact that it cannot apply amphipathic alpha-helical structure. The chain is Cytotoxic linear peptide IsCT2 from Opisthacanthus madagascariensis (Scorpion).